Consider the following 885-residue polypeptide: MPSLNDVRSTFLNYFERNGHRVVESSPLVPRNDPTLMFTNSGMVQFKNLFTGVETRDYKRATTAQKCVRAGGKHNDLDNVGYTARHHTFFEMLGNFSFGDYFKDGAIPFAWELLTKDFGIPKDKLLVTVYHTDDEAADIWKKVAGLSDDRIIRIPTSDNFWQMGPTGPCGPCTEIFYDHGEQIWGGPPGSADEDGDRFIEIWNLVFMQNEQFEDGTMRALDMQSIDTGMGLERIGALLQGKHDNYDTDLMRGLIEASAHATSADPDGPGKVHHRVIADHLRSTSFLIADGVMPSNEGRGYVLRRIMRRAMRHAHMLGAKDPVMHRLVPALVREMGAAYPELGRAQALIEETLKLEETRFKQTLDRGLRLLDDELAKLPEGANLPGEAAFKLYDTYGFPLDLTQDALREKGRAVDTAGFDSAMAEQKAKARAAWAGSGETKDAAIWFDIAEEHGATEFLGYDTEISEGQVLALVQDGAAVEEAGEGQQVQIVVNQTPFYGEAGGQVGDTGLIKTETGAARVTDTKKTGGVFIHIAEVTLGTIQRGQGAQLSVDHDRRSAIRANHSATHLLHEALRRALGEHVAQRGSLNAPDRLRFDFSHAKAMTPEELAQVEREVNDFIRQNSPVETRIMTPDDARALGAQALFGEKYGDEVRVVSMGELPGSGKGTGGQTYSLELCGGTHVARTGDIGMFALTSETASAAGIRRIEALTGQAAMDELRRVDGELNEIAGIVKAQAGDVVSKVRALADERKALANEVAQLKRQLAMGGGSEDKPREINGIKLIARRVEGVSGKELGPLVDEMKSRLGSGAVVVLAEADGKATVAAGVTPDLTGRISAVELVQTATAALGGKGGGGRPDRAQGGAPSLAAADSAISAVETLIGEKA.

4 residues coordinate Zn(2+): His563, His567, Cys677, and His681. A disordered region spans residues 848–868 (LGGKGGGGRPDRAQGGAPSLA).

It belongs to the class-II aminoacyl-tRNA synthetase family. Zn(2+) serves as cofactor.

The protein localises to the cytoplasm. It carries out the reaction tRNA(Ala) + L-alanine + ATP = L-alanyl-tRNA(Ala) + AMP + diphosphate. Catalyzes the attachment of alanine to tRNA(Ala) in a two-step reaction: alanine is first activated by ATP to form Ala-AMP and then transferred to the acceptor end of tRNA(Ala). Also edits incorrectly charged Ser-tRNA(Ala) and Gly-tRNA(Ala) via its editing domain. This Paracoccus denitrificans (strain Pd 1222) protein is Alanine--tRNA ligase.